The following is a 254-amino-acid chain: Acidic endochitinase (254 aa).

Positions 1 to 23 are cleaved as a signal peptide; it reads MKFWGSVLALSFVVFLFLTGTLA. Glutamate 91 (proton donor) is an active-site residue. Cysteines 213 and 245 form a disulfide.

This sequence belongs to the glycosyl hydrolase 19 family. Chitinase class II subfamily.

It is found in the secreted. The catalysed reaction is Random endo-hydrolysis of N-acetyl-beta-D-glucosaminide (1-&gt;4)-beta-linkages in chitin and chitodextrins.. In terms of biological role, defense against chitin-containing fungal pathogens. The protein is Acidic endochitinase of Petunia hybrida (Petunia).